A 333-amino-acid chain; its full sequence is Putative fimbrium anchoring subunit Fim4B (333 aa).

The first 20 residues, M1–G20, serve as a signal peptide directing secretion. C21 carries the N-palmitoyl cysteine lipid modification. C21 carries S-diacylglycerol cysteine lipidation. The segment at E274 to N333 is disordered. Residues P294 to E304 are compositionally biased toward basic and acidic residues. The span at D310 to D320 shows a compositional bias: gly residues.

The protein belongs to the bacteroidetes fimbrillin superfamily. FimB/Mfa2 family.

The protein resides in the cell outer membrane. Its function is as follows. Putative fimbrium anchoring subunit. This Bacteroides ovatus (strain ATCC 8483 / DSM 1896 / JCM 5824 / BCRC 10623 / CCUG 4943 / NCTC 11153) protein is Putative fimbrium anchoring subunit Fim4B.